The following is a 588-amino-acid chain: DNA ligase (588 aa).

Glu-250 provides a ligand contact to ATP. The active-site N6-AMP-lysine intermediate is Lys-252. ATP is bound by residues Arg-257, Arg-272, Glu-302, Phe-342, Arg-417, and Lys-423.

This sequence belongs to the ATP-dependent DNA ligase family. It depends on Mg(2+) as a cofactor.

The catalysed reaction is ATP + (deoxyribonucleotide)n-3'-hydroxyl + 5'-phospho-(deoxyribonucleotide)m = (deoxyribonucleotide)n+m + AMP + diphosphate.. DNA ligase that seals nicks in double-stranded DNA during DNA replication, DNA recombination and DNA repair. The sequence is that of DNA ligase from Nitrosopumilus maritimus (strain SCM1).